We begin with the raw amino-acid sequence, 339 residues long: DNA-directed RNA polymerase RPB7 homolog (339 aa).

Belongs to the Asfivirus DNA-directed RNA polymerase RPB7 homolog family. Part of the viral DNA-directed RNA polymerase that consists of 8 polII-like subunits (RPB1, RPB2, RPB3, RPB5, RPB6, RPB7, RPB9, RPB10), a capping enzyme and a termination factor.

It is found in the host cytoplasm. Its subcellular location is the virion. Its function is as follows. Component of the DNA-directed RNA polymerase (RNAP) that catalyzes the transcription in the cytoplasm of viral DNA into RNA using the four ribonucleoside triphosphates as substrates. The polypeptide is DNA-directed RNA polymerase RPB7 homolog (Ornithodoros (relapsing fever ticks)).